The primary structure comprises 88 residues: Small ribosomal subunit protein bS20 (88 aa).

Belongs to the bacterial ribosomal protein bS20 family.

Its function is as follows. Binds directly to 16S ribosomal RNA. This is Small ribosomal subunit protein bS20 from Bacillus licheniformis (strain ATCC 14580 / DSM 13 / JCM 2505 / CCUG 7422 / NBRC 12200 / NCIMB 9375 / NCTC 10341 / NRRL NRS-1264 / Gibson 46).